Consider the following 208-residue polypeptide: uncharacterized protein (208 aa).

This is an uncharacterized protein from Caenorhabditis elegans.